Consider the following 107-residue polypeptide: Large ribosomal subunit protein uL24 (107 aa).

This sequence belongs to the universal ribosomal protein uL24 family. In terms of assembly, part of the 50S ribosomal subunit.

One of two assembly initiator proteins, it binds directly to the 5'-end of the 23S rRNA, where it nucleates assembly of the 50S subunit. Its function is as follows. One of the proteins that surrounds the polypeptide exit tunnel on the outside of the subunit. The chain is Large ribosomal subunit protein uL24 from Mycobacterium ulcerans (strain Agy99).